The primary structure comprises 355 residues: Inositol polyphosphate multikinase (355 aa).

N-acetylmethionine is present on methionine 1. Lysine 31 lines the ATP pocket. A Phosphoserine modification is found at serine 97. Residues 118–120 (ENL) and aspartate 131 each bind ATP. Substrate is bound at residue 127 to 135 (PNILDIKLG). Positions 271 and 274 each coordinate Ca(2+). Over residues 284-304 (FIDDDDDDDDNDDDDDDDAEG) the composition is skewed to acidic residues. A disordered region spans residues 284–317 (FIDDDDDDDDNDDDDDDDAEGSSEGPKDKKTTGS). Aspartate 325 is an ATP binding site. Glycine 334 is a Ca(2+) binding site.

The protein belongs to the inositol phosphokinase (IPK) family. As to quaternary structure, interacts with ARG80 and MCM1. It depends on Ca(2+) as a cofactor.

The protein resides in the nucleus. The catalysed reaction is 1D-myo-inositol 1,4,5-trisphosphate + 2 ATP = 1D-myo-inositol 1,3,4,5,6-pentakisphosphate + 2 ADP + 2 H(+). It catalyses the reaction 1D-myo-inositol 1,4,5-trisphosphate + ATP = 1D-myo-inositol 1,4,5,6-tetrakisphosphate + ADP + H(+). It carries out the reaction 1D-myo-inositol 1,4,5-trisphosphate + ATP = 1D-myo-inositol 1,3,4,5-tetrakisphosphate + ADP + H(+). The enzyme catalyses 1D-myo-inositol 1,4,5,6-tetrakisphosphate + ATP = 1D-myo-inositol 1,3,4,5,6-pentakisphosphate + ADP + H(+). The catalysed reaction is a 1,2-diacyl-sn-glycero-3-phospho-(1D-myo-inositol-4,5-bisphosphate) + ATP = a 1,2-diacyl-sn-glycero-3-phospho-(1D-myo-inositol-3,4,5-trisphosphate) + ADP + H(+). In terms of biological role, inositol phosphate kinase with both monophosphoinositol and diphosphoinositol polyphosphate synthase activities. Able to phosphorylate inositol 1,4,5-trisphosphate (Ins(1,4,5)P3) on both the carbon-3 and carbon-6 positions to synthesize inositol 1,3,4,5-tetrakisphosphate (Ins(1,3,4,5)P4) and inositol 1,4,5,6-tetrakisphosphate (Ins(1,4,5,6)P4), and then to subsequently phosphorylate and convert either isomer of InsP4 to inositol 1,3,4,5,6-pentakisphosphate (Ins(1,3,4,5,6)P5). Its predominant in vivo catalytic function is to convert Ins(1,4,5)P3 to Ins(1,4,5,6)P4 to Ins(1,3,4,5,6)P5 via 6- and 3-kinase activities. It can also use Ins(1,3,4,5,6)P5 as a substrate and act as a diphosphoinositol polyphosphate synthase to generate two different isomers of PP-InsP4. Also has a role in transcription regulation. Forms a complex with ARG80, ARG81 and MCM1 (ArgR-MCM1), which coordinates the expression of arginine anabolic and catabolic genes in response to arginine. Recruits ARG80 and MCM21 to stabilize them. Neither the kinase activity nor inositol phosphates are required for the formation of ArgR-MCM1 transcriptional complexes on DNA promoter elements and the control of arginine metabolism. In contrast, only the catalytic activity is required for PHO gene repression by phosphate and for NCR gene activation in response to nitrogen availability, indicating a role for inositol pyrophosphates in these controls. Inositol polyphosphates may be involved in the regulation of chromatin remodeling of transcription. Regulates nuclear mRNA export via inositol phosphate metabolism. Also has lipid kinase activity, transforming the lipid inositol phosphatidylinositol 4,5-bisphosphate (PI(4,5)P2) into phosphatidylinositol 3,4,5-trisphosphate (PI(3,4,5)P3) in the nucleus. Its kinase activity is necessary for the propagation of most [PSI+] prion variants. The chain is Inositol polyphosphate multikinase (ARG82) from Saccharomyces cerevisiae (strain ATCC 204508 / S288c) (Baker's yeast).